Reading from the N-terminus, the 201-residue chain is Potassium-transporting ATPase KdpC subunit (201 aa).

A helical membrane pass occupies residues 10–30 (VVLVVLTVICGLAYPLAMTGI). Residues 67 to 105 (HGRPSATSAADPADPTKTVSSPYNAANSSGSNLGPTSKA) form a disordered region. Residues 70 to 82 (PSATSAADPADPT) are compositionally biased toward low complexity. Residues 83–105 (KTVSSPYNAANSSGSNLGPTSKA) are compositionally biased toward polar residues.

This sequence belongs to the KdpC family. In terms of assembly, the system is composed of three essential subunits: KdpA, KdpB and KdpC.

It localises to the cell inner membrane. Functionally, part of the high-affinity ATP-driven potassium transport (or Kdp) system, which catalyzes the hydrolysis of ATP coupled with the electrogenic transport of potassium into the cytoplasm. This subunit acts as a catalytic chaperone that increases the ATP-binding affinity of the ATP-hydrolyzing subunit KdpB by the formation of a transient KdpB/KdpC/ATP ternary complex. The chain is Potassium-transporting ATPase KdpC subunit from Rhodopseudomonas palustris (strain BisB5).